The chain runs to 301 residues: m7GpppX diphosphatase (301 aa).

Residues Glu154, Lys176, and 237–248 (HYQPSFYHLHVH) each bind substrate. Residues 244–248 (HLHVH) carry the Histidine triad motif motif. The active-site Nucleophile is His246.

It belongs to the HIT family.

It is found in the nucleus. The catalysed reaction is a 5'-end (N(7)-methyl 5'-triphosphoguanosine)-ribonucleoside in mRNA + H2O = N(7)-methyl-GMP + a 5'-end diphospho-ribonucleoside in mRNA + 2 H(+). The enzyme catalyses a 5'-end (N(2),N(2),N(7)-trimethyl 5'-triphosphoguanosine)-ribonucleoside in mRNA + H2O = (N(2),N(2),N(7))-trimethyl-GMP + a 5'-end diphospho-ribonucleoside in mRNA + 2 H(+). Its activity is regulated as follows. The hydrolytic product 7-methylguanosine diphosphate (m7GDP) efficiently inhibits the decapping scavenger activity and acts as a competitive inhibitor in vitro. Functionally, decapping scavenger enzyme that catalyzes the cleavage of a residual cap structure following the degradation of mRNAs of the 3'-&gt;5' exosome-mediated mRNA decay pathway. Hydrolyzes cap analog structures like 7-methylguanosine nucleoside triphosphate (m7GpppG) and tri-methyl guanosine nucleoside triphosphate (m3(2,2,7)GpppG) with up to 2 nucleotide substrates (small capped oligoribonucleotides) and specifically releases 5'-phosphorylated RNA fragments and 7-methylguanosine monophosphate (m7GMP). Does not hydrolyze unmethylated cap analog (GpppG) and shows no decapping activity on intact m7GpppG-capped mRNA molecules. Does not hydrolyze 7-methylguanosine diphosphate (m7GDP) and tri-methylguanosine diphosphate (m3(2,2,7)GDP) to m(7)GMP and m3(2,2,7)GMP, respectively. May also play a role in the 5'-&gt;3 mRNA decay pathway; m7GDP, the downstream product released by the 5'-&gt;3' mRNA mediated decapping activity, may be also converted by dcs-1 to m7GMP. Binds to m7GpppG and strongly to m7GDP. This chain is m7GpppX diphosphatase, found in Ascaris suum (Pig roundworm).